A 254-amino-acid polypeptide reads, in one-letter code: Ribonuclease HII (254 aa).

One can recognise an RNase H type-2 domain in the interval 70-254 (RYICGIDEVG…ASFIKNLTSC (185 aa)). Residues Asp-76, Glu-77, and Asp-168 each coordinate a divalent metal cation.

This sequence belongs to the RNase HII family. It depends on Mn(2+) as a cofactor. The cofactor is Mg(2+).

The protein localises to the cytoplasm. It catalyses the reaction Endonucleolytic cleavage to 5'-phosphomonoester.. Its function is as follows. Endonuclease that specifically degrades the RNA of RNA-DNA hybrids. In Lachnoclostridium phytofermentans (strain ATCC 700394 / DSM 18823 / ISDg) (Clostridium phytofermentans), this protein is Ribonuclease HII.